Here is a 156-residue protein sequence, read N- to C-terminus: Ribosomal RNA large subunit methyltransferase H (156 aa).

S-adenosyl-L-methionine-binding positions include Leu73, Gly104, and 123-128; that span reads ISSMTL.

The protein belongs to the RNA methyltransferase RlmH family. Homodimer.

The protein localises to the cytoplasm. It catalyses the reaction pseudouridine(1915) in 23S rRNA + S-adenosyl-L-methionine = N(3)-methylpseudouridine(1915) in 23S rRNA + S-adenosyl-L-homocysteine + H(+). In terms of biological role, specifically methylates the pseudouridine at position 1915 (m3Psi1915) in 23S rRNA. The sequence is that of Ribosomal RNA large subunit methyltransferase H from Burkholderia cenocepacia (strain ATCC BAA-245 / DSM 16553 / LMG 16656 / NCTC 13227 / J2315 / CF5610) (Burkholderia cepacia (strain J2315)).